Consider the following 864-residue polypeptide: Valine--tRNA ligase (864 aa).

The short motif at 42-52 is the 'HIGH' region element; it reads PTISGKLHIGH. The 'KMSKS' region signature appears at 589-593; the sequence is KMSKS. Residue lysine 592 participates in ATP binding.

It belongs to the class-I aminoacyl-tRNA synthetase family. ValS type 2 subfamily. In terms of assembly, monomer.

The protein localises to the cytoplasm. It catalyses the reaction tRNA(Val) + L-valine + ATP = L-valyl-tRNA(Val) + AMP + diphosphate. Functionally, catalyzes the attachment of valine to tRNA(Val). As ValRS can inadvertently accommodate and process structurally similar amino acids such as threonine, to avoid such errors, it has a 'posttransfer' editing activity that hydrolyzes mischarged Thr-tRNA(Val) in a tRNA-dependent manner. This chain is Valine--tRNA ligase, found in Wolbachia pipientis wMel.